A 1035-amino-acid polypeptide reads, in one-letter code: Cell-division control histidine kinase PdhS (1035 aa).

Residues methionine 1–aspartate 613 form an important for polar localization region. Residues glutamine 500 to glutamate 533 form a disordered region. An interaction with DivK region spans residues alanine 614–aspartate 1035. The PAS domain occupies histidine 659–valine 730. Positions arginine 802 to arginine 1031 constitute a Histidine kinase domain. Histidine 805 bears the Phosphohistidine; by autocatalysis mark.

Interacts with DivK.

Its subcellular location is the cytoplasm. It carries out the reaction ATP + protein L-histidine = ADP + protein N-phospho-L-histidine.. Functions as a polar differentiation marker. Essential protein that, by localizing in the old pole of dividing cells, controls cell division and maturation, probably through control of DivK phosphorylation status and cellular distribution, which in turn regulates CtrA, a transcriptional regulator of the minB operon. The asymmetrical localization of this protein is probably required for cells to enter a new division cycle. This Brucella ovis (strain ATCC 25840 / 63/290 / NCTC 10512) protein is Cell-division control histidine kinase PdhS (pdhS).